Consider the following 395-residue polypeptide: Protein BTN1 (395 aa).

Residues 1–31 (MQLEPAHLVYAAFWTFGLVNNVLYVVILTAA) form the signal peptide. The next 10 membrane-spanning stretches (helical) occupy residues 43-63 (VVLLADVLPSFLIKLAAPFFI), 74-94 (LLVGLSTVGMMSVSLASPLFL), 96-116 (LVGVVLASFSSGLGEVTFLQL), 134-154 (GAGLVGSGLFMLLTTVLGVSV), 158-178 (LLVFAFFPLAFLGVYFYLLPP), 222-242 (PLVMPYMLPLFLVYFSEYTIN), 261-278 (FRDVYVTYGTLYQLGVFI), 291-311 (IMIPSVLQFANLVFCIAQSMS), 313-333 (ILPNVWLVFILIFYEGLLGGA), and 355-375 (LGSVGMSDSAGIVLAGLVSLW).

It belongs to the battenin family.

Its subcellular location is the vacuole membrane. Involved in vacuolar transport and vacuole pH homeostasis. Also required for cytokinesis. In Yarrowia lipolytica (strain CLIB 122 / E 150) (Yeast), this protein is Protein BTN1 (BTN1).